The sequence spans 173 residues: Ribulose bisphosphate carboxylase small subunit, chloroplastic 3 (173 aa).

A chloroplast-targeting transit peptide spans 1 to 49; sequence MASIPATVATVAQANMVAPFTGLKSNAAFPVTKKVNDFSTLPSNGGRVQ.

The protein belongs to the RuBisCO small chain family. Heterohexadecamer of 8 large and 8 small subunits.

It localises to the plastid. Its subcellular location is the chloroplast. Functionally, ruBisCO catalyzes two reactions: the carboxylation of D-ribulose 1,5-bisphosphate, the primary event in carbon dioxide fixation, as well as the oxidative fragmentation of the pentose substrate. Both reactions occur simultaneously and in competition at the same active site. Although the small subunit is not catalytic it is essential for maximal activity. The protein is Ribulose bisphosphate carboxylase small subunit, chloroplastic 3 of Flaveria pringlei.